We begin with the raw amino-acid sequence, 320 residues long: MIKKIGVLTSGGDAPGMNAAVRGVVRAALSDGLEVYGIYDGYQGLHQNRIEKLSRTSVSDVINRGGTFLGSARFPEFKDEKVRAQAIQNLKMHGIEALVVIGGDGSYMGAKKLTEMGFPCIGIPGTIDNDVAGTDYTIGYFTALNTVIDAIDRLRDTSSSHQRISIVEVMGRHCGDLTLMSAIAGGCEYIITPETGLHKEELIAKIKEGIYKGKKHAIVALTELMTDANELAKYIEDETGRETRATVLGHIQRGGQPTAFDRILASRMGAYAVELLIQGEGGRCVGVQNEKMVHHDIIDAIENMKRPVRKDLYELADKLF.

Residue Gly12 coordinates ATP. 22 to 26 (RGVVR) contributes to the ADP binding site. Residues 73–74 (RF) and 103–106 (GDGS) contribute to the ATP site. Asp104 contributes to the Mg(2+) binding site. 126–128 (TID) contacts substrate. The active-site Proton acceptor is the Asp128. Arg155 contacts ADP. Substrate is bound by residues Arg163 and 170 to 172 (MGR). ADP contacts are provided by residues 186 to 188 (GCE), Lys212, and 214 to 216 (KKH). Substrate-binding positions include Glu223, Arg244, and 250–253 (HIQR).

The protein belongs to the phosphofructokinase type A (PFKA) family. ATP-dependent PFK group I subfamily. Prokaryotic clade 'B1' sub-subfamily. As to quaternary structure, homotetramer. The cofactor is Mg(2+).

It localises to the cytoplasm. It carries out the reaction beta-D-fructose 6-phosphate + ATP = beta-D-fructose 1,6-bisphosphate + ADP + H(+). It participates in carbohydrate degradation; glycolysis; D-glyceraldehyde 3-phosphate and glycerone phosphate from D-glucose: step 3/4. Its activity is regulated as follows. Allosterically activated by ADP and other diphosphonucleosides, and allosterically inhibited by phosphoenolpyruvate. Its function is as follows. Catalyzes the phosphorylation of D-fructose 6-phosphate to fructose 1,6-bisphosphate by ATP, the first committing step of glycolysis. The protein is ATP-dependent 6-phosphofructokinase of Photobacterium profundum (strain SS9).